The sequence spans 60 residues: Small ribosomal subunit protein bS21 (60 aa).

Positions 38-60 (KGVKRREKEKAARKRLQKKHRMY) are disordered.

The protein belongs to the bacterial ribosomal protein bS21 family.

The sequence is that of Small ribosomal subunit protein bS21 from Mycoplasmoides gallisepticum (strain R(low / passage 15 / clone 2)) (Mycoplasma gallisepticum).